We begin with the raw amino-acid sequence, 394 residues long: MKINLNFVKHESFGGVLLIIATILALLFQNGFLNHFYTEILRAEFTVGFRDFNLSKPLILWVNDGLMAIFFFVVGLELKREILQGELSKPSQIALPTIGALGGVILPAVIFWAFNHGNDFAIRGWAIPTATDIAFALGVLMLLGKRIPSSLKIFLLTLAIIDDLCAIVIIAIFYTTKLSFISFVIAGICLFALWVLNKFKVSKKSAYILVTLILWVSVLKSGVHATIAGVVAAFFIPMRDDSGKSLLVELEHDLQGITSYFILPVFAFVNAGVSLAGVQINQLLNSVGMGIFFGLLIGKQVGVFLFSYIFIKLGFAKLPEGSSWTQFYGVCILTGIGFTMSLFVNSLAYHDSNEFFHADKLGILLASFTAGVIGYIYLLVFSKVAKNHRKDNES.

A run of 11 helical transmembrane segments spans residues 13 to 33 (FGGV…NGFL), 58 to 78 (LILW…GLEL), 93 to 113 (IALP…IFWA), 124 to 144 (GWAI…MLLG), 153 to 173 (IFLL…IAIF), 176 to 196 (TKLS…LWVL), 208 to 228 (ILVT…ATIA), 260 to 280 (YFIL…GVQI), 291 to 311 (IFFG…YIFI), 327 to 347 (FYGV…VNSL), and 361 to 381 (LGIL…LLVF).

Belongs to the NhaA Na(+)/H(+) (TC 2.A.33) antiporter family.

The protein resides in the cell inner membrane. The enzyme catalyses Na(+)(in) + 2 H(+)(out) = Na(+)(out) + 2 H(+)(in). Na(+)/H(+) antiporter that extrudes sodium in exchange for external protons. In Campylobacter fetus subsp. fetus (strain 82-40), this protein is Na(+)/H(+) antiporter NhaA 2.